Here is a 173-residue protein sequence, read N- to C-terminus: Putative phosphoesterase GK0864 (173 aa).

H34 acts as the Proton donor in catalysis. 2 consecutive short sequence motifs (HXTX) follow at residues 34-37 (HITL) and 115-118 (HITI). H115 functions as the Proton acceptor in the catalytic mechanism.

Belongs to the 2H phosphoesterase superfamily. YjcG family.

The protein is Putative phosphoesterase GK0864 of Geobacillus kaustophilus (strain HTA426).